The primary structure comprises 730 residues: ABC transporter G family member 20 (730 aa).

Residues 15–244 (ISLKNVCRGY…YESQTLEEVF (230 aa)) enclose the ABC transporter domain. ATP is bound at residue 47 to 54 (GASGSGKT). Positions 281-303 (VNNNNNNNNNNNNNNYNNNDDEE) are disordered. The span at 282–298 (NNNNNNNNNNNNNNYNN) shows a compositional bias: low complexity. In terms of domain architecture, ABC transmembrane type-2 spans 489-717 (SFETLAKQQA…FIAVLALNEK (229 aa)). The next 5 membrane-spanning stretches (helical) occupy residues 520 to 540 (FIDF…AISI), 572 to 592 (FLGH…IAIY), 602 to 622 (IALV…LGLV), 634 to 654 (IQLS…LWPL), and 692 to 712 (VWVA…IAVL).

It belongs to the ABC transporter superfamily.

It is found in the membrane. This is ABC transporter G family member 20 (abcG20) from Dictyostelium discoideum (Social amoeba).